Reading from the N-terminus, the 132-residue chain is ATP synthase epsilon chain, chloroplastic (132 aa).

Position 2 is an N-acetylthreonine (threonine 2).

This sequence belongs to the ATPase epsilon chain family. F-type ATPases have 2 components, CF(1) - the catalytic core - and CF(0) - the membrane proton channel. CF(1) has five subunits: alpha(3), beta(3), gamma(1), delta(1), epsilon(1). CF(0) has three main subunits: a, b and c.

It is found in the plastid. The protein resides in the chloroplast thylakoid membrane. Its function is as follows. Produces ATP from ADP in the presence of a proton gradient across the membrane. In Arabidopsis thaliana (Mouse-ear cress), this protein is ATP synthase epsilon chain, chloroplastic.